We begin with the raw amino-acid sequence, 267 residues long: Nus factor SuhB (267 aa).

Mg(2+)-binding residues include E67, D84, and L86. E67 provides a ligand contact to substrate. Substrate-binding positions include 86 to 89 (LDGT), R183, and D212.

It belongs to the inositol monophosphatase superfamily. In terms of assembly, homodimer. The rRNA transcription and antitermination complex (rrnTAC) consists of RNA polymerase (RNAP), NusA, NusB, NusE (rpsJ), NusG, SubB, ribosomal protein S4, DNA and precursor rRNA; S4 is more flexible than other subunits. Requires Mg(2+) as cofactor.

It localises to the cytoplasm. It catalyses the reaction a myo-inositol phosphate + H2O = myo-inositol + phosphate. Its function is as follows. Part of the processive rRNA transcription and antitermination complex (rrnTAC). The complex forms an RNA-chaperone ring around the RNA exit tunnel of RNA polymerase (RNAP). It supports rapid transcription and antitermination of rRNA operons, cotranscriptional rRNA folding, and annealing of distal rRNA regions to allow correct ribosome biogenesis. This subunit may play a central role in organizing the structure. The polypeptide is Nus factor SuhB (Vibrio cholerae serotype O1 (strain ATCC 39315 / El Tor Inaba N16961)).